A 239-amino-acid polypeptide reads, in one-letter code: Claudin-14 (239 aa).

The Cytoplasmic portion of the chain corresponds to 1–7; sequence MASTAVQ. Residues 8 to 28 form a helical membrane-spanning segment; it reads LLGFLLSFLGMVGTLITTILP. The Extracellular portion of the chain corresponds to 29-81; the sequence is HWRRTAHVGTNILTAVSYLKGLWMECVWHSTGIYQCQIYRSLLALPRDLQAAR. The helical transmembrane segment at 82–102 threads the bilayer; it reads ALMVISCLLSGMACACAVVGM. The Cytoplasmic segment spans residues 103 to 115; it reads KCTRCAKGTPAKT. The helical transmembrane segment at 116 to 136 threads the bilayer; sequence TFAVLGGALFLLAGLLCMVAV. Residues 137–162 are Extracellular-facing; it reads SWTTNDVVQNFYNPLLPSGMKFEIGQ. A helical transmembrane segment spans residues 163-183; sequence ALYLGFISSSLSLIGGTLLCL. The Cytoplasmic portion of the chain corresponds to 184–239; the sequence is SCQDEAPYRPYPPQSRAGATTTATAPAYRPPAAYKDNRAPSVTSAAHSGYRLNDYV.

Belongs to the claudin family. Expressed in all sensory epithelia of the inner ear vestibular organs, as well as in liver and kidney.

The protein resides in the cell junction. It is found in the tight junction. It localises to the cell membrane. Functionally, plays a major role in tight junction-specific obliteration of the intercellular space, through calcium-independent cell-adhesion activity. This Mus musculus (Mouse) protein is Claudin-14 (Cldn14).